The following is a 196-amino-acid chain: Anthranilate synthase component 2 (196 aa).

The Glutamine amidotransferase type-1 domain occupies 1-195 (MLLLIDNYDS…LNTTRRLETA (195 aa)). 52–54 (GPC) is an L-glutamine binding site. The Nucleophile; for GATase activity role is filled by C80. L-glutamine is bound by residues Q84 and 130 to 131 (SL). Active-site for GATase activity residues include H169 and E171.

In terms of assembly, heterotetramer consisting of two non-identical subunits: a beta subunit (TrpG) and a large alpha subunit (TrpE).

The enzyme catalyses chorismate + L-glutamine = anthranilate + pyruvate + L-glutamate + H(+). It functions in the pathway amino-acid biosynthesis; L-tryptophan biosynthesis; L-tryptophan from chorismate: step 1/5. Part of a heterotetrameric complex that catalyzes the two-step biosynthesis of anthranilate, an intermediate in the biosynthesis of L-tryptophan. In the first step, the glutamine-binding beta subunit (TrpG) of anthranilate synthase (AS) provides the glutamine amidotransferase activity which generates ammonia as a substrate that, along with chorismate, is used in the second step, catalyzed by the large alpha subunit of AS (TrpE) to produce anthranilate. In the absence of TrpG, TrpE can synthesize anthranilate directly from chorismate and high concentrations of ammonia. Participates in the tryptophan-dependent indole-3-acetic acid production, which is a phytohormone released by A.brasilense. In Azospirillum brasilense, this protein is Anthranilate synthase component 2 (trpG).